A 349-amino-acid chain; its full sequence is Probable sugar phosphate/phosphate translocator At5g25400 (349 aa).

Helical transmembrane passes span 15 to 35, 49 to 69, 89 to 109, 113 to 133, 141 to 161, 165 to 185, 205 to 225, 236 to 256, 263 to 283, and 286 to 306; these read IIIS…VIVY, FPIS…FLLI, VVPI…AYIY, SFIQ…GVLF, ETMM…YGEA, VWGV…LVMI, VAPC…FPIL, LIFG…FLLV, TMNV…WSVI, and TVTP…AYYN. The region spanning 38-156 is the EamA domain; the sequence is YILDKKMYDW…LSISFGVAIA (119 aa). A disordered region spans residues 321 to 349; the sequence is TAQQVDEETGRLLEEREGNEGGRKNEPED. Residues 328-349 are compositionally biased toward basic and acidic residues; sequence ETGRLLEEREGNEGGRKNEPED.

The protein belongs to the TPT transporter family. TPT (TC 2.A.7.9) subfamily.

The protein resides in the membrane. This Arabidopsis thaliana (Mouse-ear cress) protein is Probable sugar phosphate/phosphate translocator At5g25400.